The sequence spans 316 residues: Phosphate acyltransferase (316 aa).

Belongs to the PlsX family. In terms of assembly, homodimer. Probably interacts with PlsY.

The protein resides in the cytoplasm. It carries out the reaction a fatty acyl-[ACP] + phosphate = an acyl phosphate + holo-[ACP]. The protein operates within lipid metabolism; phospholipid metabolism. Catalyzes the reversible formation of acyl-phosphate (acyl-PO(4)) from acyl-[acyl-carrier-protein] (acyl-ACP). This enzyme utilizes acyl-ACP as fatty acyl donor, but not acyl-CoA. The chain is Phosphate acyltransferase from Chlamydia felis (strain Fe/C-56) (Chlamydophila felis).